Consider the following 326-residue polypeptide: Tagatose 1,6-diphosphate aldolase 2 (326 aa).

The protein belongs to the aldolase LacD family.

The catalysed reaction is D-tagatofuranose 1,6-bisphosphate = D-glyceraldehyde 3-phosphate + dihydroxyacetone phosphate. It participates in carbohydrate metabolism; D-tagatose 6-phosphate degradation; D-glyceraldehyde 3-phosphate and glycerone phosphate from D-tagatose 6-phosphate: step 2/2. This Streptococcus agalactiae serotype III (strain NEM316) protein is Tagatose 1,6-diphosphate aldolase 2 (lacD2).